The following is a 92-amino-acid chain: Small ribosomal subunit protein uS19 (92 aa).

This sequence belongs to the universal ribosomal protein uS19 family.

In terms of biological role, protein S19 forms a complex with S13 that binds strongly to the 16S ribosomal RNA. The chain is Small ribosomal subunit protein uS19 from Borrelia hermsii (strain HS1 / DAH).